The following is a 424-amino-acid chain: MFVDRARIYIKAGDGGDGAISFHREKYISKGGPDGGDGGKGGDVIFVVDEGLRTLQDFRYKTRYRAEDGQNGGSSNCSGRSGEDLIIKVPPGTLVKDEQTGRILADLVKPGKKVVIAKGGKGGAGNQHFATPTRQVPSFAKPGEPGEELWVILELKLLADVGLIGFPNVGKSTILSMVTAAQPKIANYHFTTINPNLGVVNIDAENAFVMADIPGLIEGAHQGVGLGHEFLKHIERTKLLIHVVDISGSEGRDPVQDFEVINEELKKYNPVLCERPQIIAANKMDVTGAEENLEKFRKVIEPRGYKIFPVSAASNKGLKELIYYAAQKLKELPDTVLVNDQDNEVVYTAVEEEPFNIRKENGVFVVEGSWVQRLVRSVNFDNYESLQYFQRAIRRKGIVDALESMGINEGDTVRMYDLEFEYFR.

The region spanning 1–158 is the Obg domain; sequence MFVDRARIYI…LWVILELKLL (158 aa). An OBG-type G domain is found at 159–330; the sequence is ADVGLIGFPN…LIYYAAQKLK (172 aa). GTP contacts are provided by residues 165–172, 190–194, 212–215, 282–285, and 311–313; these read GFPNVGKS, FTTIN, DIPG, NKMD, and SAA. Ser172 and Thr192 together coordinate Mg(2+). The 78-residue stretch at 347–424 folds into the OCT domain; it reads YTAVEEEPFN…MYDLEFEYFR (78 aa).

This sequence belongs to the TRAFAC class OBG-HflX-like GTPase superfamily. OBG GTPase family. As to quaternary structure, monomer. Mg(2+) serves as cofactor.

Its subcellular location is the cytoplasm. Its function is as follows. An essential GTPase which binds GTP, GDP and possibly (p)ppGpp with moderate affinity, with high nucleotide exchange rates and a fairly low GTP hydrolysis rate. Plays a role in control of the cell cycle, stress response, ribosome biogenesis and in those bacteria that undergo differentiation, in morphogenesis control. This Acetivibrio thermocellus (strain ATCC 27405 / DSM 1237 / JCM 9322 / NBRC 103400 / NCIMB 10682 / NRRL B-4536 / VPI 7372) (Clostridium thermocellum) protein is GTPase Obg.